The sequence spans 1262 residues: Ras-specific guanine nucleotide-releasing factor 1 (1262 aa).

Positions 22–130 constitute a PH 1 domain; the sequence is DGTRKGYLSK…WVAAIARASY (109 aa). Residue serine 71 is modified to Phosphoserine; by PLK2. In terms of domain architecture, IQ spans 208–233; sequence KKIKKVQSFLRGWLCRRKWKNIIQDY. A DH domain is found at 244–430; sequence KRNQVVFSML…EELSRIMHDE (187 aa). The region spanning 460 to 588 is the PH 2 domain; it reads TFVRQGSLMQ…WTSDIIQCVD (129 aa). A phosphoserine; by PLK2 mark is found at serine 581 and serine 617. The 115-residue stretch at 635–749 folds into the N-terminal Ras-GEF domain; the sequence is KVLQIRYASV…RRRKLSLNIP (115 aa). Residues 714 to 738 are disordered; that stretch reads DAPKSPRASRKFSSPPPLAIGTSSP. Serine 745 carries the phosphoserine modification. At serine 766 the chain carries Phosphoserine; by PLK2. Residues 800 to 854 form a disordered region; the sequence is EEIDVPATIPEKPGELSASRKHSSDVLKEESEDDQNHSDEDNTEVSPVKSPPTPK. Residues 821 to 839 are compositionally biased toward basic and acidic residues; the sequence is HSSDVLKEESEDDQNHSDE. One can recognise a Ras-GEF domain in the interval 1027-1259; sequence PALEIAEQLT…YESSLLIEPK (233 aa).

In terms of assembly, homooligomer and heterooligomer with RASGRF2. Interacts with USP8, thereby regulating its stability. Post-translationally, phosphorylated by PLK2, leading to ubiquitination and degradation by the proteasome. Ubiquitinated and degraded following phosphorylation by PLK2. In terms of processing, phosphorylated by SRC and LCK. Phosphorylation by LCK increases its capacity to stimulate the GDP/GTP exchange on Ras, whereas its phosphorylation by SRC seems not to have an effect on stimulation activity. As to expression, brain.

Functionally, promotes the exchange of Ras-bound GDP by GTP. This chain is Ras-specific guanine nucleotide-releasing factor 1 (Rasgrf1), found in Mus musculus (Mouse).